Here is a 52-residue protein sequence, read N- to C-terminus: Unknown protein from spot 415 of 2D-PAGE of etiolated coleoptile (52 aa).

The protein is Unknown protein from spot 415 of 2D-PAGE of etiolated coleoptile of Zea mays (Maize).